An 88-amino-acid polypeptide reads, in one-letter code: Large ribosomal subunit protein bL27 (88 aa).

A disordered region spans residues 1–25 (MAHKKAGGSSRNGRDSPGQRRGIKR).

This sequence belongs to the bacterial ribosomal protein bL27 family.

In Lawsonia intracellularis, this protein is Large ribosomal subunit protein bL27 (rpmA).